The chain runs to 341 residues: Ribosomal RNA small subunit methyltransferase H (341 aa).

S-adenosyl-L-methionine-binding positions include 47 to 49 (GGY), D64, F91, D109, and Q116.

It belongs to the methyltransferase superfamily. RsmH family.

It is found in the cytoplasm. It carries out the reaction cytidine(1402) in 16S rRNA + S-adenosyl-L-methionine = N(4)-methylcytidine(1402) in 16S rRNA + S-adenosyl-L-homocysteine + H(+). In terms of biological role, specifically methylates the N4 position of cytidine in position 1402 (C1402) of 16S rRNA. This is Ribosomal RNA small subunit methyltransferase H from Rhizobium johnstonii (strain DSM 114642 / LMG 32736 / 3841) (Rhizobium leguminosarum bv. viciae).